The primary structure comprises 101 residues: uncharacterized protein (101 aa).

This is an uncharacterized protein from Methanocaldococcus jannaschii (strain ATCC 43067 / DSM 2661 / JAL-1 / JCM 10045 / NBRC 100440) (Methanococcus jannaschii).